The following is a 363-amino-acid chain: DNA replication and repair protein RecF (363 aa).

Glycine 30–threonine 37 lines the ATP pocket.

This sequence belongs to the RecF family.

It is found in the cytoplasm. Its function is as follows. The RecF protein is involved in DNA metabolism; it is required for DNA replication and normal SOS inducibility. RecF binds preferentially to single-stranded, linear DNA. It also seems to bind ATP. The polypeptide is DNA replication and repair protein RecF (Chlorobium limicola (strain DSM 245 / NBRC 103803 / 6330)).